The chain runs to 360 residues: Photosystem II protein D1 (360 aa).

3 helical membrane passes run 29-46, 118-133, and 142-156; these read YIGW…TATS, HFLL…EWEL, and WISV…AAAA. H118 is a binding site for chlorophyll a. Y126 contacts pheophytin a. [CaMn4O5] cluster contacts are provided by D170 and E189. Residues 197-218 traverse the membrane as a helical segment; sequence FHQLGVAGVFGGSLFSAMHGSL. Position 198 (H198) interacts with chlorophyll a. A quinone contacts are provided by residues H215 and 264-265; that span reads SF. H215 provides a ligand contact to Fe cation. H272 contributes to the Fe cation binding site. A helical transmembrane segment spans residues 274-288; that stretch reads FLGLWPVVGIWFTAM. Residues H332, E333, D342, and A344 each contribute to the [CaMn4O5] cluster site. The propeptide occupies 345–360; it reads SSNSLPVSLVAPSVNG.

It belongs to the reaction center PufL/M/PsbA/D family. In terms of assembly, PSII is composed of 1 copy each of membrane proteins PsbA, PsbB, PsbC, PsbD, PsbE, PsbF, PsbH, PsbI, PsbJ, PsbK, PsbL, PsbM, PsbT, PsbX, PsbY, PsbZ, Psb30/Ycf12, at least 3 peripheral proteins of the oxygen-evolving complex and a large number of cofactors. It forms dimeric complexes. Requires The D1/D2 heterodimer binds P680, chlorophylls that are the primary electron donor of PSII, and subsequent electron acceptors. It shares a non-heme iron and each subunit binds pheophytin, quinone, additional chlorophylls, carotenoids and lipids. D1 provides most of the ligands for the Mn4-Ca-O5 cluster of the oxygen-evolving complex (OEC). There is also a Cl(-1) ion associated with D1 and D2, which is required for oxygen evolution. The PSII complex binds additional chlorophylls, carotenoids and specific lipids. as cofactor. In terms of processing, tyr-161 forms a radical intermediate that is referred to as redox-active TyrZ, YZ or Y-Z. Post-translationally, C-terminally processed by CTPA; processing is essential to allow assembly of the oxygen-evolving complex and thus photosynthetic growth.

It is found in the plastid. It localises to the chloroplast thylakoid membrane. The catalysed reaction is 2 a plastoquinone + 4 hnu + 2 H2O = 2 a plastoquinol + O2. Its function is as follows. Photosystem II (PSII) is a light-driven water:plastoquinone oxidoreductase that uses light energy to abstract electrons from H(2)O, generating O(2) and a proton gradient subsequently used for ATP formation. It consists of a core antenna complex that captures photons, and an electron transfer chain that converts photonic excitation into a charge separation. The D1/D2 (PsbA/PsbD) reaction center heterodimer binds P680, the primary electron donor of PSII as well as several subsequent electron acceptors. This chain is Photosystem II protein D1, found in Gracilaria tenuistipitata var. liui (Red alga).